A 346-amino-acid polypeptide reads, in one-letter code: tRNA N6-adenosine threonylcarbamoyltransferase (346 aa).

Fe cation-binding residues include H111 and H115. Residues 134–138 (LVSGG), D167, G180, and N279 contribute to the substrate site. D307 is a binding site for Fe cation.

This sequence belongs to the KAE1 / TsaD family. Fe(2+) is required as a cofactor.

The protein localises to the cytoplasm. The catalysed reaction is L-threonylcarbamoyladenylate + adenosine(37) in tRNA = N(6)-L-threonylcarbamoyladenosine(37) in tRNA + AMP + H(+). Functionally, required for the formation of a threonylcarbamoyl group on adenosine at position 37 (t(6)A37) in tRNAs that read codons beginning with adenine. Is involved in the transfer of the threonylcarbamoyl moiety of threonylcarbamoyl-AMP (TC-AMP) to the N6 group of A37, together with TsaE and TsaB. TsaD likely plays a direct catalytic role in this reaction. The polypeptide is tRNA N6-adenosine threonylcarbamoyltransferase (Burkholderia pseudomallei (strain 1106a)).